The chain runs to 427 residues: Glutamate-1-semialdehyde 2,1-aminomutase (427 aa).

K265 carries the N6-(pyridoxal phosphate)lysine modification.

The protein belongs to the class-III pyridoxal-phosphate-dependent aminotransferase family. HemL subfamily. As to quaternary structure, homodimer. The cofactor is pyridoxal 5'-phosphate.

It localises to the cytoplasm. The enzyme catalyses (S)-4-amino-5-oxopentanoate = 5-aminolevulinate. Its pathway is porphyrin-containing compound metabolism; protoporphyrin-IX biosynthesis; 5-aminolevulinate from L-glutamyl-tRNA(Glu): step 2/2. This is Glutamate-1-semialdehyde 2,1-aminomutase from Neisseria meningitidis serogroup C (strain 053442).